We begin with the raw amino-acid sequence, 296 residues long: Ribosomal protein L11 methyltransferase (296 aa).

Residues threonine 145, glycine 166, aspartate 188, and asparagine 230 each coordinate S-adenosyl-L-methionine.

It belongs to the methyltransferase superfamily. PrmA family.

The protein resides in the cytoplasm. The catalysed reaction is L-lysyl-[protein] + 3 S-adenosyl-L-methionine = N(6),N(6),N(6)-trimethyl-L-lysyl-[protein] + 3 S-adenosyl-L-homocysteine + 3 H(+). Its function is as follows. Methylates ribosomal protein L11. This chain is Ribosomal protein L11 methyltransferase, found in Photorhabdus laumondii subsp. laumondii (strain DSM 15139 / CIP 105565 / TT01) (Photorhabdus luminescens subsp. laumondii).